The chain runs to 433 residues: Phosphomethylpyrimidine synthase (433 aa).

Residues asparagine 68, methionine 97, tyrosine 126, histidine 162, 184–186 (SRG), 225–228 (DALR), and glutamate 264 contribute to the substrate site. Residue histidine 268 coordinates Zn(2+). A substrate-binding site is contributed by tyrosine 291. Zn(2+) is bound at residue histidine 332. Residues cysteine 408, cysteine 411, and cysteine 415 each coordinate [4Fe-4S] cluster.

This sequence belongs to the ThiC family. Requires [4Fe-4S] cluster as cofactor.

It catalyses the reaction 5-amino-1-(5-phospho-beta-D-ribosyl)imidazole + S-adenosyl-L-methionine = 4-amino-2-methyl-5-(phosphooxymethyl)pyrimidine + CO + 5'-deoxyadenosine + formate + L-methionine + 3 H(+). It functions in the pathway cofactor biosynthesis; thiamine diphosphate biosynthesis. Catalyzes the synthesis of the hydroxymethylpyrimidine phosphate (HMP-P) moiety of thiamine from aminoimidazole ribotide (AIR) in a radical S-adenosyl-L-methionine (SAM)-dependent reaction. The chain is Phosphomethylpyrimidine synthase from Fusobacterium nucleatum subsp. nucleatum (strain ATCC 25586 / DSM 15643 / BCRC 10681 / CIP 101130 / JCM 8532 / KCTC 2640 / LMG 13131 / VPI 4355).